A 427-amino-acid polypeptide reads, in one-letter code: L-cysteine:1D-myo-inositol 2-amino-2-deoxy-alpha-D-glucopyranoside ligase (427 aa).

Cysteine 46 serves as a coordination point for Zn(2+). Residues 46–49 (CGIT), threonine 61, and 84–86 (NVT) contribute to the L-cysteinyl-5'-AMP site. A 'HIGH' region motif is present at residues 48-58 (ITPYDATHMGH). A 'ERGGDP' region motif is present at residues 186-191 (ERGGDP). L-cysteinyl-5'-AMP is bound at residue tryptophan 233. Cysteine 237 serves as a coordination point for Zn(2+). An L-cysteinyl-5'-AMP-binding site is contributed by 255 to 257 (GSD). Zn(2+) is bound at residue histidine 262. Valine 289 is an L-cysteinyl-5'-AMP binding site. The 'KMSKS' region motif lies at 295 to 299 (KMSKS).

The protein belongs to the class-I aminoacyl-tRNA synthetase family. MshC subfamily. Monomer. It depends on Zn(2+) as a cofactor.

The catalysed reaction is 1D-myo-inositol 2-amino-2-deoxy-alpha-D-glucopyranoside + L-cysteine + ATP = 1D-myo-inositol 2-(L-cysteinylamino)-2-deoxy-alpha-D-glucopyranoside + AMP + diphosphate + H(+). Its function is as follows. Catalyzes the ATP-dependent condensation of GlcN-Ins and L-cysteine to form L-Cys-GlcN-Ins. This chain is L-cysteine:1D-myo-inositol 2-amino-2-deoxy-alpha-D-glucopyranoside ligase, found in Catenulispora acidiphila (strain DSM 44928 / JCM 14897 / NBRC 102108 / NRRL B-24433 / ID139908).